Here is a 688-residue protein sequence, read N- to C-terminus: Sialic acid-binding Ig-like lectin 10 (688 aa).

Residues 1–17 (MSLLLFLLSFLLDGPQG) form the signal peptide. The Extracellular segment spans residues 18-543 (QMESYFLQVQ…DKDSATAFSK (526 aa)). Residues 26–138 (VQRIVKAQEG…SFKEEFRLQV (113 aa)) form the Ig-like V-type domain. 3 disulfide bridges follow: Cys37–Cys172, Cys42–Cys102, and Cys163–Cys214. N-acetylneuraminate is bound at residue Arg120. In terms of domain architecture, Ig-like C2-type 1 spans 145–228 (PDIFIPEVLE…SRMSTQRTVR (84 aa)). Asn195 and Asn246 each carry an N-linked (GlcNAc...) asparagine glycan. 2 consecutive Ig-like C2-type domains span residues 250–334 (PDLH…LDLS) and 339–436 (PQDL…LSLS). 2 cysteine pairs are disulfide-bonded: Cys271–Cys318 and Cys375–Cys420. A helical membrane pass occupies residues 544–564 (GAVLGFGITALLALCLIVVIV). Topologically, residues 565–688 (KTLQKKGTQE…YSDYTEVRVH (124 aa)) are cytoplasmic. The short motif at 588-593 (LDYINV) is the ITIM motif 1 element. Residues 602-656 (RNWKAEPDAPSRSSPLDTHFPKPKKKQKDPHFTYPGCPDPTSSSQVPVSENNPEE) are disordered. Over residues 641–652 (PTSSSQVPVSEN) the composition is skewed to polar residues. The ITIM motif 2 motif lies at 657–662 (LHYAAL). Position 659 is a phosphotyrosine (Tyr659).

This sequence belongs to the immunoglobulin superfamily. SIGLEC (sialic acid binding Ig-like lectin) family. Interacts with PTPN6/SHP-1 upon phosphorylation. Interacts with NCF1. Interacts with CD24; the probable CD24:SIGLEC10 complex is proposed to inhibit HGMB1-mediated tissue damage immune response. Interacts with HMGB1; the interaction is dependent on CD24. Associates with membrane IgM on the B cell surface. Interacts with RIGI, CBL and PTPN11. In terms of processing, phosphorylation of Tyr-659 is involved in binding to PTPN6. In terms of tissue distribution, expressed in B cells with high levels in pre-B cells and B1a cells of the peritoneal cavity.

The protein resides in the cell membrane. Its function is as follows. Putative adhesion molecule that mediates sialic-acid dependent binding to cells. Preferentially binds to alpha-2,3- or alpha-2,6-linked sialic acid. The sialic acid recognition site may be masked by cis interactions with sialic acids on the same cell surface. In the immune response, seems to act as an inhibitory receptor upon ligand induced tyrosine phosphorylation by recruiting cytoplasmic phosphatase(s) via their SH2 domain(s) that block signal transduction through dephosphorylation of signaling molecules. Involved in negative regulation of B-cell antigen receptor signaling and specifically acts on B1 cells to inhibit Ca(2+) signaling, cellular expansion and antibody secretion. The inhibition of B cell activation is dependent on PTPN6/SHP-1. In association with CD24 may be involved in the selective suppression of the immune response to danger-associated molecular patterns (DAMPs) such as HMGB1, HSP70 and HSP90. In association with CD24 may regulate the immune repsonse of natural killer (NK) cells. Plays a role in the control of autoimmunity. During initiation of adaptive immune responses by CD8-alpha(+) dendritic cells inhibits cross-presentation by impairing the formation of MHC class I-peptide complexes. The function seems to implicate recruitment of PTPN6/SHP-1, which dephosphorylates NCF1 of the NADPH oxidase complex consequently promoting phagosomal acidification. (Microbial infection) During infection by RNA viruses inhibits RIG-I signaling in macrophages by promoting its CBL-dependent ubiquitination and degradation via PTPN11/SHP-2. The chain is Sialic acid-binding Ig-like lectin 10 (Siglec10) from Mus musculus (Mouse).